A 357-amino-acid polypeptide reads, in one-letter code: Protein RecA (357 aa).

An ATP-binding site is contributed by 79-86 (GPESSGKT).

The protein belongs to the RecA family.

It is found in the cytoplasm. Functionally, can catalyze the hydrolysis of ATP in the presence of single-stranded DNA, the ATP-dependent uptake of single-stranded DNA by duplex DNA, and the ATP-dependent hybridization of homologous single-stranded DNAs. It interacts with LexA causing its activation and leading to its autocatalytic cleavage. In Chloroherpeton thalassium (strain ATCC 35110 / GB-78), this protein is Protein RecA.